Here is a 194-residue protein sequence, read N- to C-terminus: UPF0232 protein in recF-gyrB intergenic region (194 aa).

The span at 1–14 (MTGPFDDDGPEEDA) shows a compositional bias: acidic residues. Residues 1–81 (MTGPFDDDGP…GPGPDARDPQ (81 aa)) form a disordered region. The span at 30–52 (DLVRRTLEEARGAARSQGKDVGR) shows a compositional bias: basic and acidic residues.

The protein belongs to the UPF0232 family.

The protein is UPF0232 protein in recF-gyrB intergenic region of Mycolicibacterium smegmatis (Mycobacterium smegmatis).